We begin with the raw amino-acid sequence, 523 residues long: Maturase K (523 aa).

The protein belongs to the intron maturase 2 family. MatK subfamily.

It localises to the plastid. It is found in the chloroplast. In terms of biological role, usually encoded in the trnK tRNA gene intron. Probably assists in splicing its own and other chloroplast group II introns. In Asphodeline lutea (King's spear), this protein is Maturase K.